An 89-amino-acid polypeptide reads, in one-letter code: Large ribosomal subunit protein bL27 (89 aa).

Residues M1–L21 form a disordered region.

The protein belongs to the bacterial ribosomal protein bL27 family.

The protein is Large ribosomal subunit protein bL27 of Novosphingobium aromaticivorans (strain ATCC 700278 / DSM 12444 / CCUG 56034 / CIP 105152 / NBRC 16084 / F199).